The primary structure comprises 863 residues: Alanine--tRNA ligase (863 aa).

Residues H552, H556, C656, and H660 each coordinate Zn(2+).

The protein belongs to the class-II aminoacyl-tRNA synthetase family. The cofactor is Zn(2+).

Its subcellular location is the cytoplasm. It catalyses the reaction tRNA(Ala) + L-alanine + ATP = L-alanyl-tRNA(Ala) + AMP + diphosphate. Catalyzes the attachment of alanine to tRNA(Ala) in a two-step reaction: alanine is first activated by ATP to form Ala-AMP and then transferred to the acceptor end of tRNA(Ala). Also edits incorrectly charged Ser-tRNA(Ala) and Gly-tRNA(Ala) via its editing domain. This is Alanine--tRNA ligase from Alcanivorax borkumensis (strain ATCC 700651 / DSM 11573 / NCIMB 13689 / SK2).